The following is a 75-amino-acid chain: Small ribosomal subunit protein bS18 (75 aa).

It belongs to the bacterial ribosomal protein bS18 family. In terms of assembly, part of the 30S ribosomal subunit. Forms a tight heterodimer with protein bS6.

Functionally, binds as a heterodimer with protein bS6 to the central domain of the 16S rRNA, where it helps stabilize the platform of the 30S subunit. This chain is Small ribosomal subunit protein bS18, found in Buchnera aphidicola subsp. Schizaphis graminum (strain Sg).